Here is a 349-residue protein sequence, read N- to C-terminus: tRNA pseudouridine synthase D (349 aa).

Phenylalanine 27 provides a ligand contact to substrate. Aspartate 80 (nucleophile) is an active-site residue. Substrate is bound at residue asparagine 129. In terms of domain architecture, TRUD spans 155–303 (GVPNYFGAQR…VEAARRAMLL (149 aa)). Phenylalanine 329 contributes to the substrate binding site.

The protein belongs to the pseudouridine synthase TruD family.

The catalysed reaction is uridine(13) in tRNA = pseudouridine(13) in tRNA. Its function is as follows. Responsible for synthesis of pseudouridine from uracil-13 in transfer RNAs. In Escherichia coli (strain SE11), this protein is tRNA pseudouridine synthase D.